Consider the following 360-residue polypeptide: Protein Wnt-2 (360 aa).

The signal sequence occupies residues 1–25; the sequence is MNAPLGGIWLWLPLLLTWLTPEVNS. Disulfide bonds link C76-C87, C127-C135, C137-C157, C206-C220, C208-C215, C278-C309, C294-C304, C308-C348, C324-C339, C326-C336, and C331-C332. S212 is lipidated: O-palmitoleoyl serine; by PORCN. N-linked (GlcNAc...) asparagine glycosylation occurs at N295.

The protein belongs to the Wnt family. Palmitoleoylation is required for efficient binding to frizzled receptors. Depalmitoleoylation leads to Wnt signaling pathway inhibition.

The protein resides in the secreted. Its subcellular location is the extracellular space. It localises to the extracellular matrix. In terms of biological role, ligand for members of the frizzled family of seven transmembrane receptors. Functions in the canonical Wnt signaling pathway that results in activation of transcription factors of the TCF/LEF family. Functions as a upstream regulator of FGF10 expression. Plays an important role in embryonic lung development. May contribute to embryonic brain development by regulating the proliferation of dopaminergic precursors and neurons. The polypeptide is Protein Wnt-2 (WNT2) (Nomascus leucogenys (Northern white-cheeked gibbon)).